Consider the following 588-residue polypeptide: Probable G-protein coupled receptor 162 (588 aa).

The Extracellular portion of the chain corresponds to 1–17; that stretch reads MARGGAGAEEASLRSNA. A helical membrane pass occupies residues 18 to 38; that stretch reads LSWLACGLLALLANAWIILSI. Topologically, residues 39 to 49 are cytoplasmic; that stretch reads SAKQQKHKPLE. Residues 50 to 70 traverse the membrane as a helical segment; it reads LLLCFLAGTHILMAAVPLTTF. Topologically, residues 71–91 are extracellular; sequence AVVQLRRQASSDYDWNESICK. N86 carries N-linked (GlcNAc...) asparagine glycosylation. A helical transmembrane segment spans residues 92-112; sequence VFVSTYYTLALATCFTVASLS. The Cytoplasmic portion of the chain corresponds to 113 to 133; sequence YHRMWMVRWPVNYRLSNAKKQ. Residues 134 to 154 form a helical membrane-spanning segment; the sequence is ALHAVMGIWMVSFILSTLPSI. Residues 155 to 174 are Extracellular-facing; the sequence is GWHNNGERYYARGCQFIVSK. Residues 175–195 traverse the membrane as a helical segment; the sequence is IGLGFGVCFSLLLLGGIVMGL. Topologically, residues 196–275 are cytoplasmic; sequence VCVAITFYQT…SLQVTNLVSA (80 aa). A helical transmembrane segment spans residues 276 to 296; the sequence is IVFLYDSLTGVPILVVSFFSL. Topologically, residues 297-303 are extracellular; it reads KSDSAPP. The chain crosses the membrane as a helical span at residues 304-324; that stretch reads WMVLAVLWCSMAQTLLLPSFI. Residues 325 to 588 are Cytoplasmic-facing; that stretch reads WSCERYRADV…GNPIFPQLTL (264 aa). Phosphoserine is present on residues S413 and S435. 2 disordered regions span residues 445–474 and 511–550; these read QSRA…AEGG and ETPL…AVGL. Low complexity predominate over residues 530 to 546; it reads PLGLSPRRLSLGSPESR.

Belongs to the G-protein coupled receptor 1 family.

The protein localises to the cell membrane. In terms of biological role, orphan receptor. The protein is Probable G-protein coupled receptor 162 (GPR162) of Homo sapiens (Human).